Consider the following 160-residue polypeptide: Conopressin/conophysin, isoform 2 (160 aa).

An N-terminal signal peptide occupies residues 1-30; the sequence is MKCSVLQMSRLSWAMCLMLLMLLLLGTAQG. A disulfide bridge connects residues C31 and C36. G39 is subject to Glycine amide. Positions 40–47 are excised as a propeptide; that stretch reads GKRAVDAL. Disulfide bonds link C53-C97, C56-C70, C64-C87, C71-C77, C104-C118, C112-C130, and C119-C124.

The protein belongs to the vasopressin/oxytocin family. In terms of tissue distribution, expressed by the venom gland.

The protein localises to the secreted. In terms of biological role, targets vasopressin-oxytocin related receptors. The sequence is that of Conopressin/conophysin, isoform 2 from Conus monile (Necklace cone).